The primary structure comprises 412 residues: Zinc finger protein 821 (412 aa).

The disordered stretch occupies residues 26–83 (RQAMMKTDFPGDLGSQRQAIQQLRDQDSSSSDSEGDEEETTQDEVSSHTSEEDGGVVK). Residues 58-67 (SEGDEEETTQ) show a composition bias toward acidic residues. 2 C2H2-type zinc fingers span residues 116-140 (ELCQ…VYQH) and 150-172 (YMCP…LLIH). The stretch at 257 to 366 (KWALRRQNEP…EKMDMMLRAQ (110 aa)) forms a coiled coil. A disordered region spans residues 278 to 319 (RTAKKSRRDNETPEEREVRRMRDREAKRLQRMQETDEQRARR).

This sequence belongs to the krueppel C2H2-type zinc-finger protein family.

It is found in the nucleus. In terms of biological role, may be involved in transcriptional regulation. The chain is Zinc finger protein 821 (ZNF821) from Homo sapiens (Human).